The following is a 587-amino-acid chain: MGVNAVHWFRKGLRLHDNPALKECIQGADTIRCVYILDPWFAGSSNVGINRWRFLLQCLEDLDANLRKLNSRLLVIRGQPADVFPRLFKEWNITKLSIEYDSEPFGKERDAAIKKLATEAGVEVIVRISHTLYDLDKIIELNGGQPPLTYKRFQTLISKMEPLEIPVETITSEVIEKCTTPLSDDHDEKYGVPSLEELGFDTDGLSSAVWPGGETEALTRLERHLERRAWVANFERPRMNANSLLASPTGLSPYLRFGCLSCRLFYFKLTDLYKKVKKNSSPPLSLYGQLLWREFFYTAATNNPRFDKMEGNPICVQIPWDKNPEALAKWAEGRTGFPWIDAIMTQLRQEGWIHHLARHAVACFLTGSDLWISWEEGMKVFEELLLDADWSINAGSWMWLSCSSFFQQFFHCYCPVGFGRRTDPNGDYIRRYLPVLRGFPAKYIYDPWNAPEGIQKVAKCLIGVNYPKPMVNHAEASRLNIERMKQIYQQLSRYRGLGLLASVPSNPNGNGGLMGYTPGENIPNCSSSGSCSQGSGILHYAHGDSQQAHLLKQGSSSMGHGLSNGKRPSQEEDTQSIGPKVQRQSTN.

The 130-residue stretch at 3–132 folds into the Photolyase/cryptochrome alpha/beta domain; the sequence is VNAVHWFRKG…EVIVRISHTL (130 aa). Lys-11 participates in a covalent cross-link: Glycyl lysine isopeptide (Lys-Gly) (interchain with G-Cter in ubiquitin). The LIR 1 motif lies at 50 to 54; sequence NRWRF. Ser-71 carries the phosphoserine; by AMPK modification. The LIR 2 signature appears at 82-87; the sequence is DVFPRL. Lys-107 is covalently cross-linked (Glycyl lysine isopeptide (Lys-Gly) (interchain with G-Cter in ubiquitin)). Residues 151–156 carry the LIR 3 motif; it reads KRFQTL. Lys-159 participates in a covalent cross-link: Glycyl lysine isopeptide (Lys-Gly) (interchain with G-Cter in ubiquitin). Ser-247 carries the phosphoserine; by MAPK modification. Ser-252 serves as a coordination point for FAD. 2 short sequence motifs (LIR) span residues 255 to 260 and 271 to 276; these read LRFGCL and DLYKKV. The residue at position 280 (Ser-280) is a Phosphoserine; by AMPK. The LIR 6 motif lies at 285-290; it reads SLYGQL. Position 289 (Gln-289) interacts with FAD. Residue Lys-329 forms a Glycyl lysine isopeptide (Lys-Gly) (interchain with G-Cter in ubiquitin) linkage. The LIR 7 signature appears at 335–339; the sequence is TGFPW. His-355 provides a ligand contact to FAD. The tract at residues 371–470 is required for inhibition of CLOCK-BMAL1-mediated transcription; sequence WISWEEGMKV…LIGVNYPKPM (100 aa). The LIR 8 motif lies at 379–384; it reads KVFEEL. An FAD-binding site is contributed by 387-389; that stretch reads DAD. 3 short sequence motifs (LIR) span residues 395-400, 411-416, and 430-435; these read GSWMWL, HCYCPV, and RRYLPV. The tract at residues 471 to 493 is interaction with TIMELESS; it reads VNHAEASRLNIERMKQIYQQLSR. A Glycyl lysine isopeptide (Lys-Gly) (interchain with G-Cter in ubiquitin) cross-link involves residue Lys-485. Short sequence motifs (LIR) lie at residues 486–491 and 492–497; these read QIYQQL and SRYRGL. Positions 554 to 587 are disordered; that stretch reads GSSSMGHGLSNGKRPSQEEDTQSIGPKVQRQSTN. At Ser-569 the chain carries Phosphoserine.

It belongs to the DNA photolyase class-1 family. In terms of assembly, component of the circadian core oscillator, which includes the CRY proteins, CLOCK or NPAS2, BMAL1 or BMAL2, CSNK1D and/or CSNK1E, TIMELESS, and the PER proteins. Interacts directly with TIMELESS. Interacts directly with PER1, PER2 and PER3; interaction with PER2 inhibits its ubiquitination and vice versa. Interacts with FBXL21. Interacts with FBXL3. Interacts with CLOCK-BMAL1 independently of PER2 and DNA. Interacts with HDAC1, HDAC2 and SIN3B. Interacts with nuclear receptors AR, NR1D1, NR3C1/GR, RORA and RORC; the interaction with at least NR3C1/GR is ligand dependent. Interacts with PRKDC. Interacts with the G protein subunit alpha GNAS; the interaction may block GPCR-mediated regulation of cAMP concentrations. Interacts with PRMT5. Interacts with EZH2. Interacts with MYBBP1A, DOCK7, HNRNPU, RPL7A, RPL8 and RPS3. Interacts with PPP5C (via TPR repeats). Interacts with MAP1LC3B. Interacts with CLOCK. Interacts with BMAL1. Interacts weakly with HDAC3; this interaction is enhanced in the presence of FBXL3. Interacts with TRIM28, KCTD5 and DDB1 Interacts with HNF4A. Interacts with PSMD2 in a KDM8-dependent manner. Interacts with KDM8 in a FBXL3-dependent manner. Interacts with PPARG in a ligand-dependent manner. Interacts with PPARD (via domain NR LBD) and NR1I2 (via domain NR LBD) in a ligand-dependent manner. Interacts with PPARA, NR1I3 and VDR. Requires FAD as cofactor. (6R)-5,10-methylene-5,6,7,8-tetrahydrofolate serves as cofactor. Phosphorylation on Ser-247 by MAPK is important for the inhibition of CLOCK-BMAL1-mediated transcriptional activity. Phosphorylation by CSNK1E requires interaction with PER1 or PER2. Phosphorylation at Ser-71 and Ser-280 by AMPK decreases protein stability. Phosphorylation at Ser-569 exhibits a robust circadian rhythm with a peak at CT8, increases protein stability, prevents SCF(FBXL3)-mediated degradation and is antagonized by interaction with PRKDC. In terms of processing, ubiquitinated by the SCF(FBXL3) and SCF(FBXL21) complexes, regulating the balance between degradation and stabilization. The SCF(FBXL3) complex is mainly nuclear and mediates ubiquitination and subsequent degradation of CRY1. In contrast, cytoplasmic SCF(FBXL21) complex-mediated ubiquitination leads to stabilize CRY1 and counteract the activity of the SCF(FBXL3) complex. The SCF(FBXL3) and SCF(FBXL21) complexes probably mediate ubiquitination at different Lys residues. Ubiquitination at Lys-11 and Lys-107 are specifically ubiquitinated by the SCF(FBXL21) complex but not by the SCF(FBXL3) complex. Ubiquitination may be inhibited by PER2. Deubiquitinated by USP7. Post-translationally, undergoes autophagy-mediated degradation in the liver in a time-dependent manner. Autophagic degradation of CRY1 (an inhibitor of gluconeogenesis) occurs during periods of reduced feeding allowing induction of gluconeogenesis and maintenance of blood glucose levels. Expressed in all tissues tested including spleen, liver, skeletal muscle, kidney, brain, intestine, eye, harderian gland, liver and heart. Highest levels in the eye, brain, kidney and harderian gland. In the brain, especially located to the suprachiasma nucleus (SCN).

It is found in the cytoplasm. It localises to the nucleus. Transcriptional repressor which forms a core component of the circadian clock. The circadian clock, an internal time-keeping system, regulates various physiological processes through the generation of approximately 24 hour circadian rhythms in gene expression, which are translated into rhythms in metabolism and behavior. It is derived from the Latin roots 'circa' (about) and 'diem' (day) and acts as an important regulator of a wide array of physiological functions including metabolism, sleep, body temperature, blood pressure, endocrine, immune, cardiovascular, and renal function. Consists of two major components: the central clock, residing in the suprachiasmatic nucleus (SCN) of the brain, and the peripheral clocks that are present in nearly every tissue and organ system. Both the central and peripheral clocks can be reset by environmental cues, also known as Zeitgebers (German for 'timegivers'). The predominant Zeitgeber for the central clock is light, which is sensed by retina and signals directly to the SCN. The central clock entrains the peripheral clocks through neuronal and hormonal signals, body temperature and feeding-related cues, aligning all clocks with the external light/dark cycle. Circadian rhythms allow an organism to achieve temporal homeostasis with its environment at the molecular level by regulating gene expression to create a peak of protein expression once every 24 hours to control when a particular physiological process is most active with respect to the solar day. Transcription and translation of core clock components (CLOCK, NPAS2, BMAL1, BMAL2, PER1, PER2, PER3, CRY1 and CRY2) plays a critical role in rhythm generation, whereas delays imposed by post-translational modifications (PTMs) are important for determining the period (tau) of the rhythms (tau refers to the period of a rhythm and is the length, in time, of one complete cycle). A diurnal rhythm is synchronized with the day/night cycle, while the ultradian and infradian rhythms have a period shorter and longer than 24 hours, respectively. Disruptions in the circadian rhythms contribute to the pathology of cardiovascular diseases, cancer, metabolic syndromes and aging. A transcription/translation feedback loop (TTFL) forms the core of the molecular circadian clock mechanism. Transcription factors, CLOCK or NPAS2 and BMAL1 or BMAL2, form the positive limb of the feedback loop, act in the form of a heterodimer and activate the transcription of core clock genes and clock-controlled genes (involved in key metabolic processes), harboring E-box elements (5'-CACGTG-3') within their promoters. The core clock genes: PER1/2/3 and CRY1/2 which are transcriptional repressors form the negative limb of the feedback loop and interact with the CLOCK|NPAS2-BMAL1|BMAL2 heterodimer inhibiting its activity and thereby negatively regulating their own expression. This heterodimer also activates nuclear receptors NR1D1/2 and RORA/B/G, which form a second feedback loop and which activate and repress BMAL1 transcription, respectively. CRY1 and CRY2 have redundant functions but also differential and selective contributions at least in defining the pace of the SCN circadian clock and its circadian transcriptional outputs. More potent transcriptional repressor in cerebellum and liver than CRY2, though more effective in lengthening the period of the SCN oscillator. On its side, CRY2 seems to play a critical role in tuning SCN circadian period by opposing the action of CRY1. With CRY2, is dispensable for circadian rhythm generation but necessary for the development of intercellular networks for rhythm synchrony. Capable of translocating circadian clock core proteins such as PER proteins to the nucleus. Interacts with CLOCK-BMAL1 independently of PER proteins and is found at CLOCK-BMAL1-bound sites, suggesting that CRY may act as a molecular gatekeeper to maintain CLOCK-BMAL1 in a poised and repressed state until the proper time for transcriptional activation. Represses the CLOCK-BMAL1 induced transcription of BHLHE40/DEC1, ATF4, MTA1, KLF10 and NAMPT. May repress circadian target genes expression in collaboration with HDAC1 and HDAC2 through histone deacetylation. Mediates the clock-control activation of ATR and modulates ATR-mediated DNA damage checkpoint. In liver, mediates circadian regulation of cAMP signaling and gluconeogenesis by binding to membrane-coupled G proteins and blocking glucagon-mediated increases in intracellular cAMP concentrations and CREB1 phosphorylation. Inhibits hepatic gluconeogenesis by decreasing nuclear FOXO1 levels that down-regulates gluconeogenic gene expression. Besides its role in the maintenance of the circadian clock, is also involved in the regulation of other processes. Represses glucocorticoid receptor NR3C1/GR-induced transcriptional activity by binding to glucocorticoid response elements (GREs). Plays a key role in glucose and lipid metabolism modulation, in part, through the transcriptional regulation of genes involved in these pathways, such as LEP or ACSL4. Represses PPARD and its target genes in the skeletal muscle and limits exercise capacity. Plays an essential role in the generation of circadian rhythms in the retina. Represses the transcriptional activity of NR1I2. The chain is Cryptochrome-1 (CRY1) from Spalax judaei (Judean Mountains blind mole rat).